Reading from the N-terminus, the 503-residue chain is Putative FBD-associated F-box protein At5g56410 (503 aa).

The 49-residue stretch at 2 to 50 (DKITGFSDDELLVKILSFLPTKAAVTTSILSKQWKFLWMRLPKLEYHDD) folds into the F-box domain. One can recognise an FBD domain in the interval 361 to 412 (FWEQMITSVPQCLLSSLQTFKWLGNGDSIEGKDLATFILRNSCQLKTATISI).

The sequence is that of Putative FBD-associated F-box protein At5g56410 from Arabidopsis thaliana (Mouse-ear cress).